Consider the following 169-residue polypeptide: Der GTPase-activating protein YihI (169 aa).

Disordered regions lie at residues 1-99 (MKPS…QAEL) and 146-169 (SYDDDEEEEEDEKQEDMMRLLRGN). Positions 10 to 19 (SKGHAKARRK) are enriched in basic residues. Positions 20–30 (TREELDQEARD) are enriched in basic and acidic residues. Residues 31-40 (RKRQKKRRGH) are compositionally biased toward basic residues. Residues 49–58 (GNTTSGSKGQ) show a composition bias toward polar residues. A compositionally biased stretch (acidic residues) spans 147–159 (YDDDEEEEEDEKQ). Residues 160–169 (EDMMRLLRGN) show a composition bias toward basic and acidic residues.

Belongs to the YihI family. As to quaternary structure, interacts with Der.

Its function is as follows. A GTPase-activating protein (GAP) that modifies Der/EngA GTPase function. May play a role in ribosome biogenesis. The protein is Der GTPase-activating protein YihI of Escherichia coli O45:K1 (strain S88 / ExPEC).